Reading from the N-terminus, the 881-residue chain is Sodium/sulfate cotransporter 1 (881 aa).

Transmembrane regions (helical) follow at residues 8–28 (GIVAVTFTALAFVVMAADWVG), 31–51 (ITFTVLLAFLTAFDGQIVTVA), 61–81 (GLLTVVFLYWVAEGITQTGGL), 107–127 (MVLSAFLNNTPCVTFMIPILI), 140–160 (LLIPLSYAAVLGGTCTSIGTS), and 186–206 (IFDIAPYGVPYALWGFVFILL). 4 consecutive RCK C-terminal domains span residues 212–296 (LPGN…EYGL), 318–402 (VFSA…IKTN), 407–492 (LHAV…FPGL), and 498–584 (EQVD…DKSF). A run of 6 helical transmembrane segments spans residues 601–621 (MIIGVLLATGMVLTQIIGGLK), 625–645 (YIHLWPCAVLTAALMLLTGCM), 658–678 (VYLTIAAAFGVSAALEGTGVA), 684–704 (AIISIGKGAGGTGAALIAIYI), 775–795 (FAIVGAPFQVWLMIVAGFILV), and 803–823 (VWIVSWICTAGIVLLPALYFL). The disordered stretch occupies residues 854-881 (SLRRQVSHTRTDDSGSSGSPLPAPKIVA).

Belongs to the divalent anion:Na+ symporter (DASS) superfamily. Na+/sulfate symporter (TC 2.A.47.4) family.

The protein localises to the cell membrane. Na(+)/sulfate cotransporter with a probable high-affinity for sulfate and a proteasome dependent turnover. In Chlamydomonas reinhardtii (Chlamydomonas smithii), this protein is Sodium/sulfate cotransporter 1 (SLT1).